Here is a 572-residue protein sequence, read N- to C-terminus: Sulfate adenylyltransferase (572 aa).

The tract at residues 1–169 (MANAPHGGVL…IEAVNKLNHY (169 aa)) is N-terminal. Residues 170–393 (DYVALRYTPA…LRESNPPRAT (224 aa)) form a catalytic region. Residue Q197 participates in sulfate binding. Residues 197–200 (QTRN) and 291–294 (GRDH) contribute to the ATP site. Catalysis depends on residues T198, R199, and N200. Residue R199 participates in sulfate binding. A295 contacts sulfate. Position 333 (V333) interacts with ATP. An allosteric regulation domain; adenylyl-sulfate kinase-like region spans residues 394–572 (QGFTIFLTGY…LESQGFLERQ (179 aa)). 3'-phosphoadenylyl sulfate-binding positions include 433–436 (DTVR), R450, 476–477 (IA), and R514.

It in the N-terminal section; belongs to the sulfate adenylyltransferase family. This sequence in the C-terminal section; belongs to the APS kinase family. As to quaternary structure, homohexamer. Dimer of trimers.

The protein resides in the cytoplasm. It carries out the reaction sulfate + ATP + H(+) = adenosine 5'-phosphosulfate + diphosphate. It participates in sulfur metabolism; hydrogen sulfide biosynthesis; sulfite from sulfate: step 1/3. Its activity is regulated as follows. Allosterically inhibited by 3'-phosphoadenosine 5'-phosphosulfate (PAPS). Its function is as follows. Catalyzes the first intracellular reaction of sulfate assimilation, forming adenosine-5'-phosphosulfate (APS) from inorganic sulfate and ATP. Plays an important role in sulfate activation as a component of the biosynthesis pathway of sulfur-containing amino acids. This chain is Sulfate adenylyltransferase, found in Penicillium chrysogenum (Penicillium notatum).